The chain runs to 427 residues: MERELGMYGNDRSRSRSPVRRRLSDDRDRYDDYNDSSSNNGNGSRRQRRDRGSRFNDRYDQSYGGSRYHDDRNWPPRRGGRGRGGSRSFRGGRGGGRGRTLGPIVERDLERQFDATKRNFENSIFVRNLTFDCTPEDLKELFGTVGEVVEADIITSKGHHRGMGTVEFTKNESVQDAISKFDGALFMDRKLMVRQDNPPPEAAKEFSKKATREEIDNGFEVFIINLPYSMNWQSLKDMFKECGHVLRADVELDFNGFSRGFGSVIYPTEDEMIRAIDTFNGMEVEGRVLEVREGRFNKRKNNDRYNQRREDLEDTRGTEPGLAQDAAVHIDETAAKFTEGVNPGGDRNCFIYCSNLPFSTARSDLFDLFGPIGKINNAELKPQENGQPTGVAVVEYENLVDADFCIQKLNNYNYGGCSLQISYARRD.

The disordered stretch occupies residues 1 to 101; it reads MERELGMYGN…GRGGGRGRTL (101 aa). Residues 22 to 32 are compositionally biased toward basic and acidic residues; sequence RLSDDRDRYDD. Phosphoserine is present on Ser24. Residues 35–44 show a composition bias toward low complexity; the sequence is DSSSNNGNGS. The span at 50–60 shows a compositional bias: basic and acidic residues; sequence DRGSRFNDRYD. RRM domains follow at residues 122–198 and 219–296; these read NSIF…QDNP and FEVF…EGRF. Thr130 bears the Phosphothreonine mark. Positions 300-317 are enriched in basic and acidic residues; sequence KNNDRYNQRREDLEDTRG. The disordered stretch occupies residues 300-319; that stretch reads KNNDRYNQRREDLEDTRGTE. The 78-residue stretch at 349–426 folds into the RRM 3 domain; sequence CFIYCSNLPF…CSLQISYARR (78 aa).

In terms of processing, methylated by HMT1.

It is found in the cytoplasm. It localises to the nucleus. The protein resides in the chromosome. Its subcellular location is the telomere. The protein localises to the P-body. It is found in the stress granule. In terms of biological role, binds to intron-containing transcripts and is involved in quality control for the export of spliced mRNAs from the nucleus. Binds to pre-mRNAs until splicing is completed or until faulty mRNAs are degraded. On correctly spliced mRNAs, GBP2 and HRB1 recruit MEX67 to allow nuclear export. On faulty mRNAs, GBP2 and HRB1 associate with the TRAMP complex that guides those pre-mRNAs to the exosome for degradation. Binds single-stranded telomeric sequences of the type (TG[1-3])n in vitro. Influences the localization of RAP1 in the nuclei. Involved in modulating telomere length. This Saccharomyces cerevisiae (strain ATCC 204508 / S288c) (Baker's yeast) protein is Serine/arginine (SR)-type shuttling mRNA binding protein GBP2.